We begin with the raw amino-acid sequence, 485 residues long: Cysteine protease atg4da (485 aa).

The tract at residues 22–46 (ASASSKRHLGHGAVPDGIREGSGEP) is disordered. The Nucleophile role is filled by Cys131. Catalysis depends on residues Asp368 and His370.

It belongs to the peptidase C54 family.

The protein localises to the cytoplasm. The catalysed reaction is [protein]-C-terminal L-amino acid-glycyl-phosphatidylethanolamide + H2O = [protein]-C-terminal L-amino acid-glycine + a 1,2-diacyl-sn-glycero-3-phosphoethanolamine. The enzyme catalyses [protein]-C-terminal L-amino acid-glycyl-phosphatidylserine + H2O = [protein]-C-terminal L-amino acid-glycine + a 1,2-diacyl-sn-glycero-3-phospho-L-serine. Cysteine protease that plays a key role in autophagy by mediating both proteolytic activation and delipidation of ATG8 family proteins. The protease activity is required for proteolytic activation of ATG8 family proteins to reveal a C-terminal glycine. Exposure of the glycine at the C-terminus is essential for ATG8 proteins conjugation to phosphatidylethanolamine (PE) and insertion to membranes, which is necessary for autophagy. In addition to the protease activity, also mediates delipidation of ATG8 family proteins. Catalyzes delipidation of PE-conjugated forms of ATG8 proteins during macroautophagy. Also involved in non-canonical autophagy, a parallel pathway involving conjugation of ATG8 proteins to single membranes at endolysosomal compartments, by catalyzing delipidation of ATG8 proteins conjugated to phosphatidylserine (PS). ATG4D plays a role in the autophagy-mediated neuronal homeostasis in the central nervous system. This chain is Cysteine protease atg4da, found in Danio rerio (Zebrafish).